Consider the following 419-residue polypeptide: Serine hydroxymethyltransferase (419 aa).

Residues Leu121 and 125-127 (GHL) each bind (6S)-5,6,7,8-tetrahydrofolate. Lys230 carries the post-translational modification N6-(pyridoxal phosphate)lysine.

The protein belongs to the SHMT family. Homodimer. It depends on pyridoxal 5'-phosphate as a cofactor.

Its subcellular location is the cytoplasm. The catalysed reaction is (6R)-5,10-methylene-5,6,7,8-tetrahydrofolate + glycine + H2O = (6S)-5,6,7,8-tetrahydrofolate + L-serine. It participates in one-carbon metabolism; tetrahydrofolate interconversion. It functions in the pathway amino-acid biosynthesis; glycine biosynthesis; glycine from L-serine: step 1/1. In terms of biological role, catalyzes the reversible interconversion of serine and glycine with tetrahydrofolate (THF) serving as the one-carbon carrier. This reaction serves as the major source of one-carbon groups required for the biosynthesis of purines, thymidylate, methionine, and other important biomolecules. Also exhibits THF-independent aldolase activity toward beta-hydroxyamino acids, producing glycine and aldehydes, via a retro-aldol mechanism. This chain is Serine hydroxymethyltransferase, found in Vesicomyosocius okutanii subsp. Calyptogena okutanii (strain HA).